The chain runs to 961 residues: Probable inorganic carbon transporter subunit DabA (961 aa).

4 residues coordinate Zn(2+): Cys406, Asp408, His653, and Cys668.

Belongs to the inorganic carbon transporter (TC 9.A.2) DabA family. In terms of assembly, forms a complex with DabB. It depends on Zn(2+) as a cofactor.

Its subcellular location is the cell inner membrane. Its function is as follows. Part of an energy-coupled inorganic carbon pump. This is Probable inorganic carbon transporter subunit DabA from Hydrogenobaculum sp. (strain Y04AAS1).